Here is a 715-residue protein sequence, read N- to C-terminus: Scinderin (715 aa).

The segment at 1–363 (MARELYHEEF…DGFGKVYVTE (363 aa)) is actin-severing. Residues 27–76 (LELVPVPQSAHGDFYVGDAYLVLHTAKTSRGFTYHLHFWLGKECSQDEST) form a Gelsolin-like 1 repeat. At Tyr102 the chain carries Phosphotyrosine. A 1,2-diacyl-sn-glycero-3-phospho-(1D-myo-inositol-4,5-bisphosphate) contacts are provided by residues 112–119 (KGGLKYKA) and 138–146 (RLLHVKGRR). 4 Gelsolin-like repeats span residues 148-188 (VRAT…YERL), 265-307 (VVAE…QERK), 398-451 (VEIW…DELT), and 523-564 (TRIV…EEEK). Residues 364 to 715 (KVAQIKQIPF…WFLGWDSSKW (352 aa)) are ca(2+)-dependent actin binding. Ca(2+) is bound by residues Asn538, Asp539, and Glu562. Position 599 is a phosphotyrosine (Tyr599). Residues 626–668 (FVIEEIPGEFTQDDLAEDDVMLLDAWEQIFIWIGKDANEVEKK) form a Gelsolin-like 6 repeat. Ca(2+)-binding residues include Asp643, Asp644, and Glu666.

The protein belongs to the villin/gelsolin family. Expressed in megakaryocytes.

Its subcellular location is the cytoplasm. It localises to the cytoskeleton. The protein resides in the cell projection. It is found in the podosome. In terms of biological role, ca(2+)-dependent actin filament-severing protein that has a regulatory function in exocytosis by affecting the organization of the microfilament network underneath the plasma membrane. Severing activity is inhibited by phosphatidylinositol 4,5-bis-phosphate (PIP2). In vitro, also has barbed end capping and nucleating activities in the presence of Ca(2+). Required for megakaryocyte differentiation, maturation, polyploidization and apoptosis with the release of platelet-like particles. Plays a role in osteoclastogenesis (OCG) and actin cytoskeletal organization in osteoclasts. Regulates chondrocyte proliferation and differentiation. Inhibits cell proliferation and tumorigenesis. Signaling is mediated by MAPK, p38 and JNK pathways. This is Scinderin from Homo sapiens (Human).